The chain runs to 387 residues: Chaperone protein DnaJ (387 aa).

The 66-residue stretch at 6–71 (DYYEILGVPR…EKRRKYDQFG (66 aa)) folds into the J domain. A CR-type zinc finger spans residues 146–228 (GCEKEIPIYR…CGGTGTVRRQ (83 aa)). The Zn(2+) site is built by C159, C162, C176, C179, C202, C205, C216, and C219. CXXCXGXG motif repeat units lie at residues 159-166 (CSVCGGSG), 176-183 (CQKCGGTG), 202-209 (CDACGGVG), and 216-223 (CRECGGTG).

This sequence belongs to the DnaJ family. As to quaternary structure, homodimer. It depends on Zn(2+) as a cofactor.

Its subcellular location is the cytoplasm. In terms of biological role, participates actively in the response to hyperosmotic and heat shock by preventing the aggregation of stress-denatured proteins and by disaggregating proteins, also in an autonomous, DnaK-independent fashion. Unfolded proteins bind initially to DnaJ; upon interaction with the DnaJ-bound protein, DnaK hydrolyzes its bound ATP, resulting in the formation of a stable complex. GrpE releases ADP from DnaK; ATP binding to DnaK triggers the release of the substrate protein, thus completing the reaction cycle. Several rounds of ATP-dependent interactions between DnaJ, DnaK and GrpE are required for fully efficient folding. Also involved, together with DnaK and GrpE, in the DNA replication of plasmids through activation of initiation proteins. In Caldicellulosiruptor saccharolyticus (strain ATCC 43494 / DSM 8903 / Tp8T 6331), this protein is Chaperone protein DnaJ.